The chain runs to 81 residues: uncharacterized protein (81 aa).

The first 20 residues, 1 to 20, serve as a signal peptide directing secretion; the sequence is MIDDHEALLLLVLSSGPAAL.

This is an uncharacterized protein from Treponema pallidum (strain Nichols).